Reading from the N-terminus, the 123-residue chain is NADH-quinone oxidoreductase subunit A (123 aa).

The next 3 membrane-spanning stretches (helical) occupy residues tyrosine 11–leucine 31, isoleucine 64–valine 84, and isoleucine 93–isoleucine 113.

Belongs to the complex I subunit 3 family. In terms of assembly, NDH-1 is composed of 14 different subunits. Subunits NuoA, H, J, K, L, M, N constitute the membrane sector of the complex.

Its subcellular location is the cell inner membrane. It catalyses the reaction a quinone + NADH + 5 H(+)(in) = a quinol + NAD(+) + 4 H(+)(out). Its function is as follows. NDH-1 shuttles electrons from NADH, via FMN and iron-sulfur (Fe-S) centers, to quinones in the respiratory chain. The immediate electron acceptor for the enzyme in this species is believed to be ubiquinone. Couples the redox reaction to proton translocation (for every two electrons transferred, four hydrogen ions are translocated across the cytoplasmic membrane), and thus conserves the redox energy in a proton gradient. The polypeptide is NADH-quinone oxidoreductase subunit A (Rickettsia conorii (strain ATCC VR-613 / Malish 7)).